The chain runs to 346 residues: Biotin synthase (346 aa).

In terms of domain architecture, Radical SAM core spans 38 to 256; that stretch reads RQVQVSTLLS…IAVARIMMPT (219 aa). The [4Fe-4S] cluster site is built by Cys-53, Cys-57, and Cys-60. Positions 97, 128, 188, and 260 each coordinate [2Fe-2S] cluster.

The protein belongs to the radical SAM superfamily. Biotin synthase family. Homodimer. [4Fe-4S] cluster serves as cofactor. It depends on [2Fe-2S] cluster as a cofactor.

It carries out the reaction (4R,5S)-dethiobiotin + (sulfur carrier)-SH + 2 reduced [2Fe-2S]-[ferredoxin] + 2 S-adenosyl-L-methionine = (sulfur carrier)-H + biotin + 2 5'-deoxyadenosine + 2 L-methionine + 2 oxidized [2Fe-2S]-[ferredoxin]. The protein operates within cofactor biosynthesis; biotin biosynthesis; biotin from 7,8-diaminononanoate: step 2/2. Its function is as follows. Catalyzes the conversion of dethiobiotin (DTB) to biotin by the insertion of a sulfur atom into dethiobiotin via a radical-based mechanism. In Shigella boydii serotype 18 (strain CDC 3083-94 / BS512), this protein is Biotin synthase.